A 397-amino-acid polypeptide reads, in one-letter code: Xylose isomerase (397 aa).

Active-site residues include His-54 and Asp-57. Residues Glu-181, Glu-217, His-220, Asp-245, Asp-255, Asp-257, and Asp-293 each coordinate Mg(2+).

Belongs to the xylose isomerase family. In terms of assembly, homotetramer. The cofactor is Mg(2+).

The protein resides in the cytoplasm. The enzyme catalyses alpha-D-xylose = alpha-D-xylulofuranose. This chain is Xylose isomerase, found in Clavibacter sepedonicus (Clavibacter michiganensis subsp. sepedonicus).